A 545-amino-acid chain; its full sequence is Sensory neuron membrane protein 1 (545 aa).

The Cytoplasmic segment spans residues 1–10 (MELKERNFKK). Residues 11–31 (IGLICVAVLLCGMVFSYGIFP) form a helical membrane-spanning segment. Residues 32–464 (SILRFMIKQN…LFLGLKFNAT (433 aa)) lie on the Extracellular side of the membrane. Residues N69, N214, and N227 are each glycosylated (N-linked (GlcNAc...) asparagine). 3 cysteine pairs are disulfide-bonded: C266–C331, C295–C351, and C333–C340. Residues N444 and N462 are each glycosylated (N-linked (GlcNAc...) asparagine). The chain crosses the membrane as a helical span at residues 465-485 (VKWLTIIIGTVGAVGSAYMYF). Residues 486–545 (RKETKTTDVAPVDVSTPDTNPSSAKDGVVNVSLGRNLPPVIDGLDKPPKLRATELQQERY) are Cytoplasmic-facing.

It belongs to the CD36 family. In terms of tissue distribution, selectively expressed in antenna.

The protein resides in the cell membrane. Plays an olfactory role that is not restricted to pheromone sensitivity. The chain is Sensory neuron membrane protein 1 (snmp1) from Anopheles gambiae (African malaria mosquito).